The primary structure comprises 631 residues: Integrator complex subunit 10 (631 aa).

Residues 545–570 show a composition bias toward polar residues; it reads FELTSSPNSSGTPTATTVAGGSQSRR. The tract at residues 545-577 is disordered; it reads FELTSSPNSSGTPTATTVAGGSQSRRIGTRGAD.

This sequence belongs to the Integrator subunit 10 family. As to quaternary structure, belongs to the multiprotein complex Integrator, at least composed of IntS1, IntS2, IntS3, IntS4, omd/IntS5, IntS6, defl/IntS7, IntS8, IntS9, IntS10, IntS11, IntS12, asun/IntS13, IntS14 and IntS15. The core complex associates with protein phosphatase 2A subunits mts/PP2A and Pp2A-29B, to form the Integrator-PP2A (INTAC) complex.

Its subcellular location is the nucleus. In terms of biological role, component of the integrator complex, a multiprotein complex that terminates RNA polymerase II (Pol II) transcription in the promoter-proximal region of genes. The integrator complex provides a quality checkpoint during transcription elongation by driving premature transcription termination of transcripts that are unfavorably configured for transcriptional elongation: the complex terminates transcription by (1) catalyzing dephosphorylation of the C-terminal domain (CTD) of Pol II subunit Polr2A/Rbp1 and Spt5, and (2) degrading the exiting nascent RNA transcript via endonuclease activity. The integrator complex is also involved in the 3'-end processing of the U7 snRNA, and also the spliceosomal snRNAs U1, U2, U4 and U5. The protein is Integrator complex subunit 10 of Drosophila melanogaster (Fruit fly).